Consider the following 505-residue polypeptide: Maturase K (505 aa).

This sequence belongs to the intron maturase 2 family. MatK subfamily.

The protein localises to the plastid. It localises to the chloroplast. Usually encoded in the trnK tRNA gene intron. Probably assists in splicing its own and other chloroplast group II introns. In Amaranthus greggii (Gregg's amaranth), this protein is Maturase K.